A 177-amino-acid chain; its full sequence is FMRFamide-related peptides (177 aa).

An N-terminal signal peptide occupies residues 1–21; sequence MNHPRSIAMLAALWLVVSVTS. Residues 22-32 constitute a propeptide that is removed on maturation; the sequence is TPVRRSPDLEA. Phenylalanine 45 is modified (phenylalanine amide). A propeptide spanning residues 47 to 93 is cleaved from the precursor; it reads RSTLPVVPPAQPSFLQRYSAPQPAALTADDLMTFLRAYEEDYSSPVS. A phenylalanine amide mark is found at phenylalanine 102 and phenylalanine 111. Residues 113–131 constitute a propeptide that is removed on maturation; sequence RSVDEENSGYQAETNTYPQ. Leucine 143 bears the Leucine amide mark. A propeptide spanning residues 145 to 177 is cleaved from the precursor; the sequence is RDNELSESNDEDRYEVESERTKRSVVDPCNDCA. Residues 145–177 are disordered; it reads RDNELSESNDEDRYEVESERTKRSVVDPCNDCA. Positions 149–158 are enriched in acidic residues; sequence LSESNDEDRY. The segment covering 159 to 169 has biased composition (basic and acidic residues); that stretch reads EVESERTKRSV.

The protein belongs to the FARP (FMRFamide related peptide) family. In terms of tissue distribution, only expressed in the CNS and predominantly in the thoracic ganglia. Strongest expression is seen in two pairs of large neurons in each thoracic ganglion. These neurons are ventrolateral neurosecretory cells 1 and 2, they project their axons through transverse nerves into the periphery where axons from the prothoracic ganglion innervate the prothoracic gland.

It localises to the secreted. Functionally, regulates ecdysteroidogenesis by direct innervation of the prothoracic gland by reducing cAMP production via the receptor for myosuppressin. The neurons that innervate the prothoracic gland during the fifth instar are most active during days 0-4, after which they reduce and then peak again on day 6. Expression suppresses the biosynthesis of steroid hormones called ecdysteroids that elicit molting and metamorphosis. The protein is FMRFamide-related peptides of Bombyx mori (Silk moth).